Here is a 480-residue protein sequence, read N- to C-terminus: Phosphoglucosamine mutase (480 aa).

Residues 1–41 (MPKHTKKDPREGAPSATGEPQKQAAGRKLFGTDGVRGVANQ) are disordered. Catalysis depends on Ser127, which acts as the Phosphoserine intermediate. Positions 127, 269, 271, and 273 each coordinate Mg(2+). Phosphoserine is present on Ser127.

Belongs to the phosphohexose mutase family. It depends on Mg(2+) as a cofactor. Activated by phosphorylation.

The catalysed reaction is alpha-D-glucosamine 1-phosphate = D-glucosamine 6-phosphate. Its function is as follows. Catalyzes the conversion of glucosamine-6-phosphate to glucosamine-1-phosphate. This chain is Phosphoglucosamine mutase, found in Sorangium cellulosum (strain So ce56) (Polyangium cellulosum (strain So ce56)).